A 261-amino-acid polypeptide reads, in one-letter code: Potassium/proton antiporter CemA (261 aa).

3 helical membrane-spanning segments follow: residues 138-158 (IISH…CLIL), 186-206 (ILLV…ELMI), and 221-241 (IISG…KYWI).

It belongs to the CemA family.

Its subcellular location is the plastid. It localises to the chloroplast inner membrane. It catalyses the reaction K(+)(in) + H(+)(out) = K(+)(out) + H(+)(in). Functionally, contributes to K(+)/H(+) antiport activity by supporting proton efflux to control proton extrusion and homeostasis in chloroplasts in a light-dependent manner to modulate photosynthesis. Prevents excessive induction of non-photochemical quenching (NPQ) under continuous-light conditions. Indirectly promotes efficient inorganic carbon uptake into chloroplasts. The chain is Potassium/proton antiporter CemA from Cryptomeria japonica (Japanese cedar).